The chain runs to 206 residues: Protein-methionine-sulfoxide reductase heme-binding subunit MsrQ (206 aa).

A run of 4 helical transmembrane segments spans residues 8–28, 82–102, 116–136, and 153–173; these read IVWL…WLVW, LWCF…ELGI, PYLT…LTST, and FVYL…KILS.

It belongs to the MsrQ family. Heterodimer of a catalytic subunit (MsrP) and a heme-binding subunit (MsrQ). It depends on FMN as a cofactor. The cofactor is heme b.

It is found in the cell inner membrane. Its function is as follows. Part of the MsrPQ system that repairs oxidized periplasmic proteins containing methionine sulfoxide residues (Met-O), using respiratory chain electrons. Thus protects these proteins from oxidative-stress damage caused by reactive species of oxygen and chlorine generated by the host defense mechanisms. MsrPQ is essential for the maintenance of envelope integrity under bleach stress, rescuing a wide series of structurally unrelated periplasmic proteins from methionine oxidation. MsrQ provides electrons for reduction to the reductase catalytic subunit MsrP, using the quinone pool of the respiratory chain. In Citrobacter koseri (strain ATCC BAA-895 / CDC 4225-83 / SGSC4696), this protein is Protein-methionine-sulfoxide reductase heme-binding subunit MsrQ.